The chain runs to 448 residues: Putative F-box/LRR-repeat protein At3g44810 (448 aa).

Residues Thr-6–Ser-54 enclose the F-box domain. LRR repeat units follow at residues Val-117–Ser-141, Thr-143–Pro-165, Cys-190–Lys-213, Phe-228–Arg-251, Val-290–Gly-313, and Ile-421–Leu-443.

The chain is Putative F-box/LRR-repeat protein At3g44810 from Arabidopsis thaliana (Mouse-ear cress).